Reading from the N-terminus, the 277-residue chain is Small ribosomal subunit protein uS2 (277 aa).

The disordered stretch occupies residues 254–277 (LAGAGSSALNDSGADLSEANPTEA).

The protein belongs to the universal ribosomal protein uS2 family.

In Mycobacterium leprae (strain TN), this protein is Small ribosomal subunit protein uS2 (rpsB).